Here is a 62-residue protein sequence, read N- to C-terminus: Large ribosomal subunit protein bL28 (62 aa).

The protein belongs to the bacterial ribosomal protein bL28 family.

In Halalkalibacterium halodurans (strain ATCC BAA-125 / DSM 18197 / FERM 7344 / JCM 9153 / C-125) (Bacillus halodurans), this protein is Large ribosomal subunit protein bL28.